Consider the following 355-residue polypeptide: NADH-quinone oxidoreductase subunit H (355 aa).

8 helical membrane-spanning segments follow: residues 25-45, 91-111, 126-146, 170-190, 205-225, 253-273, 290-310, and 330-350; these read LVRI…LILW, WLYL…WAVI, LLYA…AGWA, MGFA…SEIV, FLSW…VSGI, MAFA…SALA, FIPG…VFIW, and VFLP…MSPL.

The protein belongs to the complex I subunit 1 family. NDH-1 is composed of 14 different subunits. Subunits NuoA, H, J, K, L, M, N constitute the membrane sector of the complex.

The protein resides in the cell inner membrane. The enzyme catalyses a quinone + NADH + 5 H(+)(in) = a quinol + NAD(+) + 4 H(+)(out). NDH-1 shuttles electrons from NADH, via FMN and iron-sulfur (Fe-S) centers, to quinones in the respiratory chain. The immediate electron acceptor for the enzyme in this species is believed to be ubiquinone. Couples the redox reaction to proton translocation (for every two electrons transferred, four hydrogen ions are translocated across the cytoplasmic membrane), and thus conserves the redox energy in a proton gradient. This subunit may bind ubiquinone. The chain is NADH-quinone oxidoreductase subunit H from Burkholderia vietnamiensis (strain G4 / LMG 22486) (Burkholderia cepacia (strain R1808)).